Reading from the N-terminus, the 275-residue chain is Ditrans,polycis-undecaprenyl-diphosphate synthase ((2E,6E)-farnesyl-diphosphate specific) (275 aa).

D45 is a catalytic residue. D45 is a Mg(2+) binding site. Substrate is bound by residues 46-49, W50, R58, H62, and 90-92; these read GNGR and SSE. N93 serves as the catalytic Proton acceptor. Residues W94, R96, R213, and 219-221 contribute to the substrate site; that span reads RIS. E232 contributes to the Mg(2+) binding site.

Belongs to the UPP synthase family. Homodimer. Mg(2+) serves as cofactor.

It catalyses the reaction 8 isopentenyl diphosphate + (2E,6E)-farnesyl diphosphate = di-trans,octa-cis-undecaprenyl diphosphate + 8 diphosphate. In terms of biological role, catalyzes the sequential condensation of isopentenyl diphosphate (IPP) with (2E,6E)-farnesyl diphosphate (E,E-FPP) to yield (2Z,6Z,10Z,14Z,18Z,22Z,26Z,30Z,34E,38E)-undecaprenyl diphosphate (di-trans,octa-cis-UPP). UPP is the precursor of glycosyl carrier lipid in the biosynthesis of bacterial cell wall polysaccharide components such as peptidoglycan and lipopolysaccharide. The polypeptide is Ditrans,polycis-undecaprenyl-diphosphate synthase ((2E,6E)-farnesyl-diphosphate specific) (Shewanella oneidensis (strain ATCC 700550 / JCM 31522 / CIP 106686 / LMG 19005 / NCIMB 14063 / MR-1)).